A 247-amino-acid polypeptide reads, in one-letter code: 14-3-3 protein gamma-1 (247 aa).

The protein belongs to the 14-3-3 family. In terms of assembly, homodimer, and heterodimer with other family members.

It is found in the cytoplasm. In terms of biological role, adapter protein implicated in the regulation of a large spectrum of both general and specialized signaling pathways. Binds to a large number of partners, usually by recognition of a phosphoserine or phosphothreonine motif. Binding generally results in the modulation of the activity of the binding partner. This chain is 14-3-3 protein gamma-1 (ywhag1), found in Danio rerio (Zebrafish).